We begin with the raw amino-acid sequence, 153 residues long: Putative riboflavin kinase (153 aa).

Mg(2+)-binding residues include threonine 28 and asparagine 30. Glutamate 80 functions as the Nucleophile in the catalytic mechanism.

As to quaternary structure, monomer. The cofactor is Zn(2+). Mg(2+) serves as cofactor.

The protein resides in the cytoplasm. The catalysed reaction is riboflavin + ATP = FMN + ADP + H(+). It functions in the pathway cofactor biosynthesis; FMN biosynthesis; FMN from riboflavin (ATP route): step 1/1. In terms of biological role, catalyzes the phosphorylation of riboflavin (vitamin B2) to form flavin-mononucleotide (FMN). This is Putative riboflavin kinase from Drosophila melanogaster (Fruit fly).